The following is a 1374-amino-acid chain: MTDESSDVPRELMESIKDVIGRKIKISVKKKVKLEVKGDRVENKVLVLTSCRAFLLSARIPSKLELTFSYLEIHGVICHKPAQMVVETEKCNMSMKMVSPEDVSEVLAHIGTCLRRIFPGLSPLRIMKKVSMEPSERLASLQALWDSQTLAEPGPCGGFSQMYACVCDWLGFSYKEEVQWDVDTIYLTQDTRELNLQDFSHLEHRDLIPIIAALEYNQWFTKLSSKDLKLSTDVCEQILRVVSRSNRLEELVLENAGLRIDFAQKLAGALAHNPNSGLHTINLAGNSLEDRGVSSLSIQFAKLPKGLKHLNLSKTSLSPKGVNSLCQSLSANPLTASTLTHLDLSGNALRGDDLSHMYNFLAQPNTIVHLDLSNTECSLEMVCSALLRGCLQCLAVLNLSRSVFSHRKGKEVPPSFKQFFSSSLALIQINLSGTKLSPEPLKALLLGLACNHSLKGVSLDLSNCELGHCLRSGGAQVLEGCIAEIHNITSLDISDNGLESDLSTLIVWLSKNRSIQHLALGKNFNNMKSKNLTPVLDNLVQMIQDEDSPLQSLSLADSKLKAEVTIIINALGSNTSLTKVDISGNGMGDMGAKMLAKALQINTKLRTVIWDKNNITAQGFQDIAVAMEKNYTLRFMPIPMYDAAQALKTNPEKTEEALQKIENYLLRNHETRKYLQEQAYRLQQGIVTSTTQQMIDRICVKVQDHLNSLRACGGDAIQEDLKAAERLMRDAKNSKTLLPNLYHVGGASWAGASGLSSSPIQETLESMAGEVTRVVDEQLKDLLESMVDAAETLCPNVMRKAHIRQDLIHASTEKISIPRTFVKNVLLEQSGIDILNKISEVKLTVASFLSDRIVDEILDSLSSSHRKLANHFSRLNKSLPQREDLEVELVEEKPVKRAILTVEDLTEVERLEDLDTCMMTPKSKRKSIHSRMLRPVSRAFEMEFDLDKALEEVPIHIEDPPFPSVRQEKRSSGLISELPSEEGRRLEHFTKLRPKRNKKQQPTQAAVCTISILPQDGEQNGLMGRVDEGVDEFFTKKVTKMDCKRSSSRSSDAHELGEGDEKKKRDSRRSGFLNLIKSRSRSERPPTVLMTEELSSPKGAMRSPPVDTTRKEIKAAEHNGAPDRTEEIKTPEPLEEGPAEEAGRAERSDSRGSPQGGRRYVQVMGSGLLAEMKAKQERRAACAQKKLGNDVISQDPSSPVSCNTERLEGGATVPKLQPGLPEARFGSGTPEKNAKAEPRVDGGCRSRSSSSMPTSPKPLLQSPKPSPSARPSIPQKPRTASRPEDTPDSPSGPSSPKVALLPPILKKVSSDKERDGQNSSQSSPRSFSQEASRRSWGPAQEYQEQKQRSSGKDGHQGSKCSDSGEEAEKEFIFV.

Residue Met-1 is modified to N-acetylmethionine. At Ser-122 the chain carries Phosphoserine. LRR repeat units lie at residues 245 to 269 (SNRL…LAGA), 275 to 298 (NSGL…SLSI), 304 to 327 (PKGL…SLCQ), 336 to 363 (ASTL…FLAQ), 391 to 418 (LQCL…SFKQ), 423 to 447 (SLAL…LLLG), 485 to 510 (IHNI…VWLS), 547 to 570 (DSPL…IINA), 574 to 597 (NTSL…MLAK), and 658 to 682 (LQKI…AYRL). Positions 714–738 (GDAIQEDLKAAERLMRDAKNSKTLL) form a coiled coil. Thr-920 carries the post-translational modification Phosphothreonine. Disordered stretches follow at residues 961 to 982 (PFPS…PSEE) and 1040 to 1374 (KMDC…FIFV). Residues 962–985 (FPSVRQEKRSSGLISELPSEEGRR) form an LRR 11 repeat. An inhibits capping activity of CP region spans residues 962–1084 (FPSVRQEKRS…LIKSRSRSER (123 aa)). Ser-972 carries the post-translational modification Phosphoserine. Positions 1040-1064 (KMDCKRSSSRSSDAHELGEGDEKKK) are enriched in basic and acidic residues. The tract at residues 1058–1092 (EGDEKKKRDSRRSGFLNLIKSRSRSERPPTVLMTE) is necessary for localization at the cell membrane. At Ser-1096 the chain carries Phosphoserine. Basic and acidic residues-rich tracts occupy residues 1108–1132 (TTRK…KTPE) and 1141–1150 (EAGRAERSDS). A compositionally biased stretch (polar residues) spans 1191 to 1204 (VISQDPSSPVSCNT). At Thr-1229 the chain carries Phosphothreonine. A compositionally biased stretch (basic and acidic residues) spans 1232–1244 (KNAKAEPRVDGGC). The segment covering 1245–1263 (RSRSSSSMPTSPKPLLQSP) has biased composition (low complexity). Residues Ser-1281, Ser-1289, Ser-1291, Ser-1295, Ser-1319, Ser-1328, and Ser-1335 each carry the phosphoserine modification. Positions 1317 to 1330 (QNSSQSSPRSFSQE) are enriched in low complexity. The segment covering 1343–1356 (QEQKQRSSGKDGHQ) has biased composition (basic and acidic residues). A Phosphoserine modification is found at Ser-1363.

It belongs to the CARMIL family. As to quaternary structure, homodimer. Interacts (via C-terminus) with heterodimeric capping protein (CP); this interaction uncaps barbed ends capped by CP, enhances barbed-end actin polymerization and promotes lamellipodial formation and cell migration. Interacts with MYO1E. Interacts with TRIO.

Its subcellular location is the cytoplasm. The protein localises to the cytoskeleton. It is found in the cell membrane. The protein resides in the cell projection. It localises to the lamellipodium. Cell membrane-cytoskeleton-associated protein that plays a role in the regulation of actin polymerization at the barbed end of actin filaments. Prevents F-actin heterodimeric capping protein (CP) activity at the leading edges of migrating cells, and hence generates uncapped barbed ends and enhances actin polymerization, however, seems unable to nucleate filaments. Plays a role in lamellipodial protrusion formations and cell migration. The polypeptide is F-actin-uncapping protein LRRC16A (Mus musculus (Mouse)).